The sequence spans 382 residues: 6-hydroxynicotinate 3-monooxygenase (382 aa).

The signal sequence occupies residues 1–25 (MRGRQKIAIVGAGLGGAAAATLLQQ). FAD-binding positions include glycine 15, 34–35 (EQ), histidine 47, arginine 108, and leucine 130. Residue histidine 47 is the Proton acceptor of the active site. Tyrosine 215 acts as the Proton acceptor in catalysis. FAD contacts are provided by residues aspartate 294 and 307 to 308 (AC).

It belongs to the 6-hydroxynicotinate 3-monooxygenase family. Monomer. The cofactor is FAD.

It catalyses the reaction 6-hydroxynicotinate + NADH + O2 + 2 H(+) = 2,5-dihydroxypyridine + CO2 + NAD(+) + H2O. It participates in cofactor degradation; nicotinate degradation. Flavin-dependent monooxygenase (FMO) that catalyzes the decarboxylative hydroxylation of 6-hydroxynicotinic acid (6-HNA) to 2,5-dihydroxypyridine (2,5-DHP) with concomitant oxidation of NADH, a step in the aerobic nicotinate degradation pathway. In Pseudomonas putida (strain ATCC 47054 / DSM 6125 / CFBP 8728 / NCIMB 11950 / KT2440), this protein is 6-hydroxynicotinate 3-monooxygenase.